The sequence spans 512 residues: Glutathione-binding protein GsiB (512 aa).

Positions 1–26 (MARAVHRSGLVALGIATALMASCAFA) are cleaved as a signal peptide.

Belongs to the bacterial solute-binding protein 5 family. As to quaternary structure, the complex is composed of two ATP-binding proteins (GsiA), two transmembrane proteins (GsiC and GsiD) and a solute-binding protein (GsiB).

Its subcellular location is the periplasm. Its function is as follows. Part of the ABC transporter complex GsiABCD involved in glutathione import. Binds glutathione. This chain is Glutathione-binding protein GsiB, found in Shigella flexneri.